Reading from the N-terminus, the 450-residue chain is MTTRYRVEFASSRPTGKFFTARLNGQTNIFQIEWIKGLLAVPFVLHSQPTAVYQEHSENLVAVAADTHQRYAEIFRDVEKLIDDHSRPLAPPPPPVLASHLTLSVDHERNAAPGKSKLKLLVPTAGSFFSRLPLEDAFKYQDAKRMISRRRFVAPSFNDIRLTLNTAQLLGLVRGPGLDLVTFDGDVTLYDDGACLTPDNPAIPRIIRLLHQGVRIGIVTAAGYTEGAKYYERLKGLLDAVHDSSSLTPAQKDGLVVMGGESNFLFRFDSASPHRLSYVPRPEWLLDEMKSWNQEDITQLLDIAESSLRACAANLNLPVAVLRKDRAVGVYPYDRSKIHREQLEETVLVVQNTVERSVVGSRLPFCAFNGGNDVFVDIGDKSWGVRACQRYFGGIEPSRTLHVGDQFLSAGANDFKARLASTTAWIASLTETVQLLDELEEMQKAEKNRS.

ATP is bound at residue K144. The active-site Nucleophile is D184. The IMP site is built by D184, D186, D192, T220, D373, and K381. 2 residues coordinate Mg(2+): D184 and D186. D186 (proton donor) is an active-site residue. Position 405 (D405) interacts with Mg(2+).

Belongs to the ISN1 family. As to quaternary structure, homotetramer. Mg(2+) serves as cofactor.

The enzyme catalyses IMP + H2O = inosine + phosphate. Its activity is regulated as follows. Allosterically activated by ATP. ATP binding is a prerequisite to magnesium and substrate binding. ATP binds to 2 of the subunits in the homotetramer inducing a closure of these 2 subunits and the release of the C-terminal loop, thereby activating the enzyme. Functionally, IMP-specific 5'-nucleotidase involved in IMP (inositol monophosphate) degradation. The protein is IMP-specific 5'-nucleotidase 1 (isn1) of Aspergillus fumigatus (strain ATCC MYA-4609 / CBS 101355 / FGSC A1100 / Af293) (Neosartorya fumigata).